The sequence spans 225 residues: UPF0758 protein BAMEG_4721 (225 aa).

The MPN domain occupies 103–225; it reads SIRSPEDCAT…FVSLKEKGHI (123 aa). 3 residues coordinate Zn(2+): His-174, His-176, and Asp-187. The short motif at 174-187 is the JAMM motif element; sequence HNHPSGDPAPSRED.

This sequence belongs to the UPF0758 family.

The protein is UPF0758 protein BAMEG_4721 of Bacillus anthracis (strain CDC 684 / NRRL 3495).